The chain runs to 281 residues: 4-deoxy-L-threo-5-hexosulose-uronate ketol-isomerase (281 aa).

Zn(2+) is bound by residues H198, H200, E205, and H248.

The protein belongs to the KduI family. Zn(2+) is required as a cofactor.

It catalyses the reaction 5-dehydro-4-deoxy-D-glucuronate = 3-deoxy-D-glycero-2,5-hexodiulosonate. It participates in glycan metabolism; pectin degradation; 2-dehydro-3-deoxy-D-gluconate from pectin: step 4/5. Functionally, catalyzes the isomerization of 5-dehydro-4-deoxy-D-glucuronate to 3-deoxy-D-glycero-2,5-hexodiulosonate. This is 4-deoxy-L-threo-5-hexosulose-uronate ketol-isomerase from Lacticaseibacillus casei (strain BL23) (Lactobacillus casei).